Consider the following 708-residue polypeptide: F-box only protein 43 (708 aa).

Positions 35–55 (MSQRHSGQAGTEAGNGADSPP) are disordered. S76 carries the phosphoserine modification. T234 is modified (phosphothreonine). A disordered region spans residues 320-426 (PSPEVRGSIS…ISEGQLSSDE (107 aa)). Residues 327–337 (SISTPEDSGFN) show a composition bias toward polar residues. S334 is modified (phosphoserine). The span at 374-385 (KTRHLGRSRRLS) shows a compositional bias: basic residues. The segment covering 399 to 411 (EKQIVHPDSEKRA) has biased composition (basic and acidic residues). Residues 490–547 (MGIEKLDILTELKYRNLKHILAMVLESLTAESLCSVWKVSRNWREIVVQDKNANRRRK) enclose the F-box domain. The ZBR-type zinc-finger motif lies at 636–684 (ALKPCPRCQSPAKYQPYKKRGLCSRTACGFDFCVLCLCAYHGSEECSRG). Zn(2+) is bound by residues C640, C643, C658, C663, C668, C671, H676, and C681. The disordered stretch occupies residues 682–708 (SRGAAKPRNRKDALPGSAQSKRNLKRL).

In terms of assembly, part of a SCF (SKP1-cullin-F-box) protein ligase complex. According to PubMed:34595750 interaction with SKP1 does not occur. Interacts with ANAPC2; the interaction is direct, ANAPC4, CDC16, CDC23; the interaction is direct, ANAPC10; the interaction is direct and CDC26, during spermatogenesis. May interact with CDC20. Phosphorylated on Ser-76, Thr-234 and Ser-334 in response to calcium, which is a prerequisite for ubiquitination and proteasomal degradation. In terms of processing, ubiquitinated in response to calcium, which promotes proteasomal degradation. As to expression, expressed in the testis.

The protein operates within protein modification; protein ubiquitination. Functionally, required to establish and maintain the arrest of oocytes at the second meiotic metaphase until fertilization. Acts by inhibiting the anaphase-promoting complex/cyclosome (APC/C) ubiquitin ligase. Probably recognizes and binds to some phosphorylated proteins and promotes their ubiquitination and degradation. Plays a vital role in modulating the ubiquitilation of CCNB1 and CDK1 during gametogenesis. This is F-box only protein 43 (FBXO43) from Homo sapiens (Human).